Here is a 212-residue protein sequence, read N- to C-terminus: Pyridoxine/pyridoxamine 5'-phosphate oxidase (212 aa).

A disordered region spans residues 1 to 20; the sequence is MSDSAMEPQNPLTSGDFTAA. FMN-binding positions include 59–64, 74–75, lysine 81, and glutamine 103; these read RMVLLK and YT. Lysine 64 contributes to the substrate binding site. Substrate contacts are provided by tyrosine 121, arginine 125, and serine 129. Residues 138–139 and tryptophan 183 each bind FMN; that span reads QS. Position 189-191 (189-191) interacts with substrate; that stretch reads RLH. Arginine 193 contacts FMN.

The protein belongs to the pyridoxamine 5'-phosphate oxidase family. In terms of assembly, homodimer. FMN serves as cofactor.

The enzyme catalyses pyridoxamine 5'-phosphate + O2 + H2O = pyridoxal 5'-phosphate + H2O2 + NH4(+). It catalyses the reaction pyridoxine 5'-phosphate + O2 = pyridoxal 5'-phosphate + H2O2. It functions in the pathway cofactor metabolism; pyridoxal 5'-phosphate salvage; pyridoxal 5'-phosphate from pyridoxamine 5'-phosphate: step 1/1. Its pathway is cofactor metabolism; pyridoxal 5'-phosphate salvage; pyridoxal 5'-phosphate from pyridoxine 5'-phosphate: step 1/1. In terms of biological role, catalyzes the oxidation of either pyridoxine 5'-phosphate (PNP) or pyridoxamine 5'-phosphate (PMP) into pyridoxal 5'-phosphate (PLP). This is Pyridoxine/pyridoxamine 5'-phosphate oxidase from Azorhizobium caulinodans (strain ATCC 43989 / DSM 5975 / JCM 20966 / LMG 6465 / NBRC 14845 / NCIMB 13405 / ORS 571).